The chain runs to 75 residues: NECIRKWLSCVDRKNDCCEGLECYKRRHSFEVCVPIPGFCLVKWKQCDGRERDCCAGLECWKRSGNKSSVCAPIT.

6 disulfides stabilise this stretch: Cys3-Cys18, Cys10-Cys23, Cys17-Cys33, Cys40-Cys55, Cys47-Cys60, and Cys54-Cys71. Domain repeat units lie at residues 3–33 (CIRK…FEVC) and 40–71 (CLVK…SSVC). The segment at 3-71 (CIRKWLSCVD…KRSGNKSSVC (69 aa)) is 2 X approximate repeats with cysteine pattern C-C-CC-C-C.

The protein belongs to the psalmotoxin-1 family. Double-knot toxin subfamily. In terms of tissue distribution, expressed by the venom gland.

It localises to the secreted. In terms of biological role, this toxin potently and selectively inhibits ASIC1a (IC(50)=0.4 nM on rASIC1a and IC(50)=0.52 nM on hASIC1a), an isoform of the gene ASIC1. It incompletely inhibits ASIC1a activation in a pH-independent and slowly reversible manner (Tau(off)=14.2 minutes for rASIC1a and 31.8 minutes for hASIC1a). This toxin acts by binding to and stabilizing the closed state of the channel, thereby impeding the transition into a conducting state. This toxin may bind to the acidic pocket of ASIC1a, since mutation of a key residue of this pocket (Arg-350) abolishes the ability of the toxin to inhibit ASIC1a. In addition, it shows antiparasitic activities, since it moderately inhibits the larval development of the major pathogenic nematode of ruminants (H.contortus, IC(50)=22.9 uM). In vivo, this toxin protects the brain from neuronal injury when administered up to 8 hours after stroke onset. This chain is Pi-hexatoxin-Hi1a, found in Hadronyche infensa (Fraser island funnel-web spider).